We begin with the raw amino-acid sequence, 260 residues long: Kallikrein-8 (260 aa).

A signal peptide spans 1-28 (MGRPRPRAAKTWMFLLLLGGAWAGHSRA). Residues 29 to 32 (QEDK) constitute a propeptide that is removed on maturation. One can recognise a Peptidase S1 domain in the interval 33–257 (VLGGHECQPH…YLDWIKKIIG (225 aa)). Intrachain disulfides connect Cys39/Cys173, Cys58/Cys74, Cys145/Cys246, Cys152/Cys218, Cys184/Cys198, and Cys208/Cys233. His73 serves as the catalytic Charge relay system. Asn110 carries an N-linked (GlcNAc...) asparagine glycan. Asp120 serves as the catalytic Charge relay system. Ser212 (charge relay system) is an active-site residue.

This sequence belongs to the peptidase S1 family. Kallikrein subfamily. Interacts with SPINK9. In terms of tissue distribution, isoform 1 is predominantly expressed in the pancreas. Isoform 2 is expressed in adult brain and hippocampus. Isoform 1 and isoform 2 are found in fetal brain and placenta. Detected in salivary gland, uterus, thymus, breast, testis and kidney but not in spleen, liver, lung or normal ovarian tissue. Displays an 11.5-fold increase in Alzheimer disease hippocampus compared to controls and is overexpressed in some ovarian carcinomas. Expressed at low levels in normal skin while high levels are found in psoriasis vulgaris, seborrheic keratosis, lichen planus and squamous cell carcinoma skin samples. Expressed in the keratinocytes.

Its subcellular location is the secreted. It localises to the cytoplasm. The enzyme catalyses Cleavage of amide substrates following the basic amino acids Arg or Lys at the P1 position, with a preference for Arg over Lys.. Inhibited by a range of serine protease inhibitors including antipain, aprotinin, leupeptin, benzamidine and soybean trypsin inhibitor. Functionally, serine protease which is capable of degrading a number of proteins such as casein, fibrinogen, kininogen, fibronectin and collagen type IV. Also cleaves L1CAM in response to increased neural activity. Induces neurite outgrowth and fasciculation of cultured hippocampal neurons. Plays a role in the formation and maturation of orphan and small synaptic boutons in the Schaffer-collateral pathway, regulates Schaffer-collateral long-term potentiation in the hippocampus and is required for memory acquisition and synaptic plasticity. Involved in skin desquamation and keratinocyte proliferation. Plays a role in the secondary phase of pathogenesis following spinal cord injury. The sequence is that of Kallikrein-8 (KLK8) from Homo sapiens (Human).